A 250-amino-acid chain; its full sequence is tRNA pseudouridine synthase A (250 aa).

Asp-52 functions as the Nucleophile in the catalytic mechanism. Tyr-111 is a binding site for substrate.

The protein belongs to the tRNA pseudouridine synthase TruA family. As to quaternary structure, homodimer.

It catalyses the reaction uridine(38/39/40) in tRNA = pseudouridine(38/39/40) in tRNA. Formation of pseudouridine at positions 38, 39 and 40 in the anticodon stem and loop of transfer RNAs. The polypeptide is tRNA pseudouridine synthase A (Methylorubrum extorquens (strain CM4 / NCIMB 13688) (Methylobacterium extorquens)).